The following is a 391-amino-acid chain: Extracellular metalloproteinase 3 (391 aa).

Positions 1–9 (HNVVDYVAS) are excised as a propeptide. An N-linked (GlcNAc...) asparagine glycan is attached at Asn-173. His-192 provides a ligand contact to Zn(2+). Glu-193 is a catalytic residue. His-196 provides a ligand contact to Zn(2+). N-linked (GlcNAc...) asparagine glycans are attached at residues Asn-243 and Asn-385.

This sequence belongs to the peptidase M36 family. Zn(2+) serves as cofactor.

It is found in the secreted. In terms of biological role, secreted metalloproteinase probably acting as a virulence factor. This Trichophyton soudanense protein is Extracellular metalloproteinase 3 (MEP3).